Here is a 578-residue protein sequence, read N- to C-terminus: Proline--tRNA ligase (578 aa).

Belongs to the class-II aminoacyl-tRNA synthetase family. ProS type 1 subfamily. Homodimer.

It is found in the cytoplasm. It catalyses the reaction tRNA(Pro) + L-proline + ATP = L-prolyl-tRNA(Pro) + AMP + diphosphate. In terms of biological role, catalyzes the attachment of proline to tRNA(Pro) in a two-step reaction: proline is first activated by ATP to form Pro-AMP and then transferred to the acceptor end of tRNA(Pro). As ProRS can inadvertently accommodate and process non-cognate amino acids such as alanine and cysteine, to avoid such errors it has two additional distinct editing activities against alanine. One activity is designated as 'pretransfer' editing and involves the tRNA(Pro)-independent hydrolysis of activated Ala-AMP. The other activity is designated 'posttransfer' editing and involves deacylation of mischarged Ala-tRNA(Pro). The misacylated Cys-tRNA(Pro) is not edited by ProRS. This chain is Proline--tRNA ligase, found in Brachyspira hyodysenteriae (strain ATCC 49526 / WA1).